The following is a 398-amino-acid chain: MVEPQEGKTRFHDFKLSNELMHAIHDLGFPYCTPIQAQVLGYTLRGQDAIGRAQTGTGKTAAFLISIISQLQQTPPPKERYMGEPRALIIAPTRELVVQIAKDAAALTKYTGLNVMSFVGGMDFDKQLKALEARHCDILVATPGRLLDFNQRGEVHLDMVEVMVLDEADRMLDMGFIPQVRQIIRQTPPKSERQTLLFSATFTDDVMNLAKQWTTNPAIVEIEPENVASETVEQHVYAVAGSDKYKLLYNLVTQNKWERVMVFANRKDEVRRIEEKLVRDGINAAQLSGDVPQHKRIRTLESFREGRITVLVATDVAGRGIHIDGISHVINFTLPEDPDDYVHRIGRTGRAGTSGVSISFAGEDDSYQLPAIEALLGRKIKCEMPPDELLKPVPRKHH.

The Q motif motif lies at 9-37; it reads TRFHDFKLSNELMHAIHDLGFPYCTPIQA. The 181-residue stretch at 40–220 folds into the Helicase ATP-binding domain; that stretch reads LGYTLRGQDA…KQWTTNPAIV (181 aa). Residue 53-60 coordinates ATP; that stretch reads AQTGTGKT. The short motif at 166 to 169 is the DEAD box element; the sequence is DEAD. Residues 243-393 enclose the Helicase C-terminal domain; that stretch reads DKYKLLYNLV…MPPDELLKPV (151 aa).

Belongs to the DEAD box helicase family. RhlB subfamily. In terms of assembly, component of the RNA degradosome, which is a multiprotein complex involved in RNA processing and mRNA degradation.

It is found in the cytoplasm. It catalyses the reaction ATP + H2O = ADP + phosphate + H(+). In terms of biological role, DEAD-box RNA helicase involved in RNA degradation. Has RNA-dependent ATPase activity and unwinds double-stranded RNA. This chain is ATP-dependent RNA helicase RhlB, found in Pseudomonas putida (strain ATCC 47054 / DSM 6125 / CFBP 8728 / NCIMB 11950 / KT2440).